Here is a 237-residue protein sequence, read N- to C-terminus: Indole-3-glycerol phosphate synthase (237 aa).

Belongs to the TrpC family.

It catalyses the reaction 1-(2-carboxyphenylamino)-1-deoxy-D-ribulose 5-phosphate + H(+) = (1S,2R)-1-C-(indol-3-yl)glycerol 3-phosphate + CO2 + H2O. It functions in the pathway amino-acid biosynthesis; L-tryptophan biosynthesis; L-tryptophan from chorismate: step 4/5. In Thermoplasma volcanium (strain ATCC 51530 / DSM 4299 / JCM 9571 / NBRC 15438 / GSS1), this protein is Indole-3-glycerol phosphate synthase.